The primary structure comprises 425 residues: Glutamyl-tRNA reductase (425 aa).

Substrate is bound by residues 49 to 52, S109, 114 to 116, and Q120; these read TCNR and EGQ. C50 acts as the Nucleophile in catalysis. 189–194 serves as a coordination point for NADP(+); the sequence is GAGETG.

The protein belongs to the glutamyl-tRNA reductase family. In terms of assembly, homodimer.

It carries out the reaction (S)-4-amino-5-oxopentanoate + tRNA(Glu) + NADP(+) = L-glutamyl-tRNA(Glu) + NADPH + H(+). It functions in the pathway porphyrin-containing compound metabolism; protoporphyrin-IX biosynthesis; 5-aminolevulinate from L-glutamyl-tRNA(Glu): step 1/2. The protein operates within porphyrin-containing compound metabolism; chlorophyll biosynthesis. Catalyzes the NADPH-dependent reduction of glutamyl-tRNA(Glu) to glutamate 1-semialdehyde (GSA). This is Glutamyl-tRNA reductase from Pelodictyon phaeoclathratiforme (strain DSM 5477 / BU-1).